A 667-amino-acid polypeptide reads, in one-letter code: WD repeat-containing protein 48 homolog (667 aa).

WD repeat units follow at residues 26–65 (QHRN…NDKY), 71–110 (HHND…CMST), 113–152 (THRD…ALTA), 164–203 (GSKD…RSMK), 206–245 (GHTE…CIQT), 248–287 (VHKE…NKML), 290–329 (EEKA…RCTL), and 349–388 (KGGA…KKEE). Positions 591-615 (ETTPSGGNANNSLQNSQSDANSEGS) are disordered.

The protein belongs to the WD repeat WDR48 family. In terms of assembly, catalytic component of the Usp12-46 deubiquitylase complex consisting of Usp12-46, Wdr20 and Uaf1; regulatory subunit that, together wtih Wdr20, stabilizes Usp12-46. The Usp12-46 deubiquitylase complex associates with arr/arrow; the interaction leads to deubiquitination and stabilization of arr/arrow.

Functionally, regulatory component of the Usp12-46 deubiquitylase complex. activates deubiquitination by increasing the catalytic turnover without increasing the affinity of deubiquitinating enzymes for the substrate. The complex deubiquitylates the wg/wingless-signaling receptor arr/arrow, which stabilizes the receptor and increases its concentration at the cell surface; this enhances the sensitivity of cells to wg/wingless-signal stimulation. This increases the amplitude and spatial range of the signaling response to the wg/wingless morphogen gradient, facilitating the precise concentration-dependent regulation of its target genes. Together with Wdr20 and Usp12-46 required for wg/wingless-mediated signaling in the wing imaginal disc and for wg/wingless-dependent regulation of intestinal stem cell proliferation. The sequence is that of WD repeat-containing protein 48 homolog from Drosophila virilis (Fruit fly).